A 192-amino-acid chain; its full sequence is Large ribosomal subunit protein uL5 (192 aa).

It belongs to the universal ribosomal protein uL5 family. In terms of assembly, part of the 50S ribosomal subunit; part of the 5S rRNA/L5/L18/L25 subcomplex. Contacts the 5S rRNA and the P site tRNA. Forms a bridge to the 30S subunit in the 70S ribosome.

Its function is as follows. This is one of the proteins that bind and probably mediate the attachment of the 5S RNA into the large ribosomal subunit, where it forms part of the central protuberance. In the 70S ribosome it contacts protein S13 of the 30S subunit (bridge B1b), connecting the 2 subunits; this bridge is implicated in subunit movement. Contacts the P site tRNA; the 5S rRNA and some of its associated proteins might help stabilize positioning of ribosome-bound tRNAs. The chain is Large ribosomal subunit protein uL5 from Zymomonas mobilis subsp. mobilis (strain ATCC 31821 / ZM4 / CP4).